A 77-amino-acid polypeptide reads, in one-letter code: NAD(P)H-quinone oxidoreductase subunit L (77 aa).

The next 2 helical transmembrane spans lie at 12 to 32 and 47 to 67; these read LIAY…LLFY and LGIY…SPFL.

This sequence belongs to the complex I NdhL subunit family. As to quaternary structure, NDH-1 can be composed of about 15 different subunits; different subcomplexes with different compositions have been identified which probably have different functions.

It is found in the cellular thylakoid membrane. The catalysed reaction is a plastoquinone + NADH + (n+1) H(+)(in) = a plastoquinol + NAD(+) + n H(+)(out). The enzyme catalyses a plastoquinone + NADPH + (n+1) H(+)(in) = a plastoquinol + NADP(+) + n H(+)(out). NDH-1 shuttles electrons from an unknown electron donor, via FMN and iron-sulfur (Fe-S) centers, to quinones in the respiratory and/or the photosynthetic chain. The immediate electron acceptor for the enzyme in this species is believed to be plastoquinone. Couples the redox reaction to proton translocation, and thus conserves the redox energy in a proton gradient. Cyanobacterial NDH-1 also plays a role in inorganic carbon-concentration. This Prochlorococcus marinus (strain AS9601) protein is NAD(P)H-quinone oxidoreductase subunit L.